We begin with the raw amino-acid sequence, 143 residues long: MELNSIKPADGAKHAARRVGRGIGSGLGKTAGRGHKGQKSRSGGYHKVGFEGGQMPLQRRLPKRGFKSHLLKFNAEISLTALENLGLAEVDVLALKNAGLVGELAKVVKVIKSGEISKAVKLSGITATAGAKAAIEAAGGSLA.

A disordered region spans residues 1-54; sequence MELNSIKPADGAKHAARRVGRGIGSGLGKTAGRGHKGQKSRSGGYHKVGFEGGQ. A compositionally biased stretch (gly residues) spans 21–31; sequence RGIGSGLGKTA.

It belongs to the universal ribosomal protein uL15 family. Part of the 50S ribosomal subunit.

Binds to the 23S rRNA. This Acidovorax ebreus (strain TPSY) (Diaphorobacter sp. (strain TPSY)) protein is Large ribosomal subunit protein uL15.